Reading from the N-terminus, the 330-residue chain is ADP-L-glycero-D-manno-heptose-6-epimerase (330 aa).

Residues 11-12 (FI), 32-33 (DN), K39, K54, 75-79 (EGACS), and N92 contribute to the NADP(+) site. Residue Y139 is the Proton acceptor of the active site. NADP(+) is bound at residue K143. N168 contributes to the substrate binding site. Residues V169 and K177 each coordinate NADP(+). K177 serves as the catalytic Proton acceptor. Substrate contacts are provided by residues R179, H186, 200–203 (FGEY), R213, and Y292.

It belongs to the NAD(P)-dependent epimerase/dehydratase family. HldD subfamily. In terms of assembly, homopentamer. The cofactor is NADP(+).

It catalyses the reaction ADP-D-glycero-beta-D-manno-heptose = ADP-L-glycero-beta-D-manno-heptose. It functions in the pathway nucleotide-sugar biosynthesis; ADP-L-glycero-beta-D-manno-heptose biosynthesis; ADP-L-glycero-beta-D-manno-heptose from D-glycero-beta-D-manno-heptose 7-phosphate: step 4/4. Its function is as follows. Catalyzes the interconversion between ADP-D-glycero-beta-D-manno-heptose and ADP-L-glycero-beta-D-manno-heptose via an epimerization at carbon 6 of the heptose. The sequence is that of ADP-L-glycero-D-manno-heptose-6-epimerase from Burkholderia multivorans (strain ATCC 17616 / 249).